A 156-amino-acid polypeptide reads, in one-letter code: RNA pyrophosphohydrolase (156 aa).

One can recognise a Nudix hydrolase domain in the interval 6 to 148 (NYRPNVAAIV…KKNIYVKVIK (143 aa)). Residues 43 to 64 (GGIDKGESAKNALFRELKEEIG) carry the Nudix box motif.

This sequence belongs to the Nudix hydrolase family. RppH subfamily. A divalent metal cation is required as a cofactor.

Functionally, accelerates the degradation of transcripts by removing pyrophosphate from the 5'-end of triphosphorylated RNA, leading to a more labile monophosphorylated state that can stimulate subsequent ribonuclease cleavage. In Campylobacter jejuni subsp. doylei (strain ATCC BAA-1458 / RM4099 / 269.97), this protein is RNA pyrophosphohydrolase.